The chain runs to 120 residues: Cell division topological specificity factor (120 aa).

Residues L93–P120 form a disordered region.

Belongs to the MinE family.

Its function is as follows. Prevents the cell division inhibition by proteins MinC and MinD at internal division sites while permitting inhibition at polar sites. This ensures cell division at the proper site by restricting the formation of a division septum at the midpoint of the long axis of the cell. In Synechococcus sp. (strain JA-3-3Ab) (Cyanobacteria bacterium Yellowstone A-Prime), this protein is Cell division topological specificity factor.